The sequence spans 641 residues: Phosphomethylpyrimidine synthase (641 aa).

The segment covering 1-12 (MTDTSTQNTATP) has biased composition (polar residues). A disordered region spans residues 1 to 25 (MTDTSTQNTATPTDEYGAEIHPKHS). Residues Asn200, Met229, Tyr258, His294, 314–316 (SRG), 355–358 (DGLR), and Glu394 contribute to the substrate site. His398 serves as a coordination point for Zn(2+). Tyr421 is a substrate binding site. His462 lines the Zn(2+) pocket. The [4Fe-4S] cluster site is built by Cys542, Cys545, and Cys550.

It belongs to the ThiC family. It depends on [4Fe-4S] cluster as a cofactor.

It catalyses the reaction 5-amino-1-(5-phospho-beta-D-ribosyl)imidazole + S-adenosyl-L-methionine = 4-amino-2-methyl-5-(phosphooxymethyl)pyrimidine + CO + 5'-deoxyadenosine + formate + L-methionine + 3 H(+). The protein operates within cofactor biosynthesis; thiamine diphosphate biosynthesis. In terms of biological role, catalyzes the synthesis of the hydroxymethylpyrimidine phosphate (HMP-P) moiety of thiamine from aminoimidazole ribotide (AIR) in a radical S-adenosyl-L-methionine (SAM)-dependent reaction. In Corynebacterium jeikeium (strain K411), this protein is Phosphomethylpyrimidine synthase.